Consider the following 232-residue polypeptide: Ribose-5-phosphate isomerase A (232 aa).

Substrate is bound by residues 28–31 (TGST), 83–86 (DGAD), and 96–99 (KGGG). E105 serves as the catalytic Proton acceptor. K123 is a binding site for substrate.

It belongs to the ribose 5-phosphate isomerase family. In terms of assembly, homodimer.

It catalyses the reaction aldehydo-D-ribose 5-phosphate = D-ribulose 5-phosphate. Its pathway is carbohydrate degradation; pentose phosphate pathway; D-ribose 5-phosphate from D-ribulose 5-phosphate (non-oxidative stage): step 1/1. Its function is as follows. Catalyzes the reversible conversion of ribose-5-phosphate to ribulose 5-phosphate. The chain is Ribose-5-phosphate isomerase A from Allorhizobium ampelinum (strain ATCC BAA-846 / DSM 112012 / S4) (Agrobacterium vitis (strain S4)).